The chain runs to 60 residues: Large ribosomal subunit protein uL30 (60 aa).

Belongs to the universal ribosomal protein uL30 family. In terms of assembly, part of the 50S ribosomal subunit.

In Streptomyces coelicolor (strain ATCC BAA-471 / A3(2) / M145), this protein is Large ribosomal subunit protein uL30.